A 203-amino-acid chain; its full sequence is V-type ATP synthase subunit D (203 aa).

Belongs to the V-ATPase D subunit family.

Functionally, produces ATP from ADP in the presence of a proton gradient across the membrane. In Streptococcus pneumoniae (strain Hungary19A-6), this protein is V-type ATP synthase subunit D.